A 463-amino-acid polypeptide reads, in one-letter code: Retinoic acid receptor RXR-gamma (463 aa).

A modulating region spans residues 1–138 (MYGNYSHFMK…TSPGSLVKHI (138 aa)). Positions 16–53 (GGSPGHTGSTSMSPSVALPTGKPMDSHPSYTDTPVSAP) are disordered. NR C4-type zinc fingers lie at residues 139–159 (CAIC…CEGC) and 175–199 (CRDN…YQKC). The segment at residues 139–204 (CAICGDRSSG…RYQKCLVMGM (66 aa)) is a DNA-binding region (nuclear receptor). Positions 205-230 (KREAVQEERQRSRERAESEAECASSS) are hinge. Over residues 211 to 222 (EERQRSRERAES) the composition is skewed to basic and acidic residues. Residues 211-232 (EERQRSRERAESEAECASSSHE) form a disordered region. The NR LBD domain maps to 231–459 (HEDMPVERIL…SFLMEMLETP (229 aa)).

The protein belongs to the nuclear hormone receptor family. NR2 subfamily. As to quaternary structure, homodimer. Heterodimer with a RAR molecule. Binds DNA preferentially as a RAR/RXR heterodimer. Interacts with RARA. Post-translationally, acetylated by EP300.

The protein resides in the nucleus. Its subcellular location is the cytoplasm. Its function is as follows. Receptor for retinoic acid. Retinoic acid receptors bind as heterodimers to their target response elements in response to their ligands, all-trans or 9-cis retinoic acid, and regulate gene expression in various biological processes. The RAR/RXR heterodimers bind to the retinoic acid response elements (RARE) composed of tandem 5'-AGGTCA-3' sites known as DR1-DR5. The high affinity ligand for RXRs is 9-cis retinoic acid. The protein is Retinoic acid receptor RXR-gamma (Rxrg) of Mus musculus (Mouse).